Reading from the N-terminus, the 566-residue chain is Arginine--tRNA ligase (566 aa).

Positions A129–H139 match the 'HIGH' region motif.

Belongs to the class-I aminoacyl-tRNA synthetase family. Monomer.

Its subcellular location is the cytoplasm. The enzyme catalyses tRNA(Arg) + L-arginine + ATP = L-arginyl-tRNA(Arg) + AMP + diphosphate. This Wolbachia pipientis subsp. Culex pipiens (strain wPip) protein is Arginine--tRNA ligase.